Consider the following 267-residue polypeptide: Phosphonates import ATP-binding protein PhnC 2 (267 aa).

An ABC transporter domain is found at 3-247 (LSLDGVDLVH…ALDALYANEQ (245 aa)). An ATP-binding site is contributed by 36-43 (GPSGAGKT).

Belongs to the ABC transporter superfamily. Phosphonates importer (TC 3.A.1.9.1) family. The complex is composed of two ATP-binding proteins (PhnC), two transmembrane proteins (PhnE) and a solute-binding protein (PhnD).

Its subcellular location is the cell inner membrane. It catalyses the reaction phosphonate(out) + ATP + H2O = phosphonate(in) + ADP + phosphate + H(+). Part of the ABC transporter complex PhnCDE involved in phosphonates import. Responsible for energy coupling to the transport system. The chain is Phosphonates import ATP-binding protein PhnC 2 from Pseudomonas aeruginosa (strain UCBPP-PA14).